A 494-amino-acid polypeptide reads, in one-letter code: Glucose-6-phosphate exchanger SLC37A2 (494 aa).

A helical transmembrane segment spans residues 20–37 (YRFSILFLTFVFYTSYHL). N52, N63, and N67 each carry an N-linked (GlcNAc...) asparagine glycan. The next 11 helical transmembrane spans lie at 85–105 (FGVL…FSGI), 116–136 (LSTG…GFYW), 146–166 (LVQA…VACV), 187–207 (SVGN…AWGL), 208–228 (SFIV…LFLV), 295–315 (LCLL…PLYI), 327–347 (GDLS…AGLV), 355–375 (ASTC…YNKI), 384–404 (VGML…ITTA), 427–447 (AIID…AGLI), and 455–475 (VFYM…RLVY).

The protein belongs to the major facilitator superfamily. Organophosphate:Pi antiporter (OPA) (TC 2.A.1.4) family.

It is found in the endoplasmic reticulum membrane. The catalysed reaction is D-glucose 6-phosphate(in) + phosphate(out) = D-glucose 6-phosphate(out) + phosphate(in). Its function is as follows. Inorganic phosphate and glucose-6-phosphate antiporter. May transport cytoplasmic glucose-6-phosphate into the lumen of the endoplasmic reticulum and translocate inorganic phosphate into the opposite direction. This chain is Glucose-6-phosphate exchanger SLC37A2, found in Danio rerio (Zebrafish).